Consider the following 202-residue polypeptide: MKYFLWSAVTIFAIVNVVGAKNSDFDPRCLRACTAIYRPVCGFDGKQYRIFASECVMAFENCNLLLKSQKAFQKTLMSFCQVEEDFDSDFCPEVCPLLYKPVCGSYGDIKKIFPNECELKRANCKFGEAWEKINMDICRNISFKSELIDPKKKCLKPCNLNWDPICAFDGEKYFTFGNRCDMEIQTCLRSEKNWTLIRKGEC.

An N-terminal signal peptide occupies residues 1–20 (MKYFLWSAVTIFAIVNVVGA). The propeptide occupies 21–87 (KNSDFDPRCL…SFCQVEEDFD (67 aa)). 3 Kazal-like domains span residues 23–77 (SDFD…KTLM), 85–140 (DFDS…ICRN), and 148–202 (IDPK…KGEC). 5 disulfide bridges follow: cysteine 29–cysteine 62, cysteine 33–cysteine 55, cysteine 91–cysteine 124, cysteine 95–cysteine 117, and cysteine 103–cysteine 138. A glycan (N-linked (GlcNAc...) asparagine) is linked at asparagine 140. Positions 142–202 (SFKSELIDPK…NWTLIRKGEC (61 aa)) are excised as a propeptide. Disulfide bonds link cysteine 154–cysteine 187, cysteine 158–cysteine 180, and cysteine 166–cysteine 202. Residue asparagine 193 is glycosylated (N-linked (GlcNAc...) asparagine).

Expressed by the venom gland.

Its subcellular location is the secreted. In terms of biological role, may act as a serine protease inhibitor, since it possess the kazal serine protease inhibitor signature. The recombinant peptide does not produce toxic effects on insects. This chain is U-Kazal-Dg21.2, found in Dolopus genitalis (Giant Australian assassin fly).